Reading from the N-terminus, the 655-residue chain is Archaeal Lon protease (655 aa).

At 1 to 123 (MEENIESVEE…KAEREKRDRS (123 aa)) the chain is on the cytoplasmic side. 57-64 (GEPGTGKS) provides a ligand contact to ATP. Residues 124–144 (RSIMFVIFSVVLLGIIAAIVL) form a helical membrane-spanning segment. Residue arginine 145 is a topological domain, extracellular. The chain crosses the membrane as a helical span at residues 146–166 (SITLIFFAIMAAAFLYMAMAF). At 167–655 (NPVIRNEKAM…ASTRAGQNVA (489 aa)) the chain is on the cytoplasmic side. A Lon proteolytic domain is found at 433-618 (GSVVGMVNGL…EDVLKVALVN (186 aa)). Residues serine 525 and lysine 568 contribute to the active site.

Belongs to the peptidase S16 family. Archaeal LonB subfamily. Homohexamer. Organized in a ring with a central cavity.

It is found in the cell membrane. In terms of biological role, ATP-dependent serine protease that mediates the selective degradation of mutant and abnormal proteins as well as certain short-lived regulatory proteins. Degrades polypeptides processively. The sequence is that of Archaeal Lon protease from Thermoplasma volcanium (strain ATCC 51530 / DSM 4299 / JCM 9571 / NBRC 15438 / GSS1).